Here is a 66-residue protein sequence, read N- to C-terminus: Large ribosomal subunit protein bL33c (66 aa).

This sequence belongs to the bacterial ribosomal protein bL33 family.

It is found in the plastid. The protein localises to the chloroplast. This Angiopteris evecta (Mule's foot fern) protein is Large ribosomal subunit protein bL33c.